The sequence spans 131 residues: Replicase polyprotein 1ab (131 aa).

The 128-residue stretch at 1–128 folds into the Nidovirus-type SAM-dependent 2'-O-MTase domain; the sequence is ITEFSWNKYL…KLLNFGNHFI (128 aa).

Functionally, the replicase polyprotein of coronaviruses is a multifunctional protein: it contains the activities necessary for the transcription of negative stranded RNA, leader RNA, subgenomic mRNAs and progeny virion RNA as well as proteinases responsible for the cleavage of the polyprotein into functional products. The sequence is that of Replicase polyprotein 1ab (rep) from Sus scrofa (Pig).